The chain runs to 56 residues: Large ribosomal subunit protein bL32 (56 aa).

Residues 1 to 16 (MAVQKNRKTRSKRGMR) show a composition bias toward basic residues. The interval 1-28 (MAVQKNRKTRSKRGMRRSHDALTTAALS) is disordered.

It belongs to the bacterial ribosomal protein bL32 family.

The polypeptide is Large ribosomal subunit protein bL32 (Vibrio campbellii (strain ATCC BAA-1116)).